Consider the following 396-residue polypeptide: MTEHNVRNFNINFGPQHPAAHGVLRLVLELDGEIVERVDPHIGLLHRGTEKLIETKTYLQAVPYFDRLDYVAPMNQEHAYALAVEKLLGIQIPIRGQLIRVLYSEIGRILSHLLNVTTQAMDVGALTPPLWGFEEREKLMVFYERASGSRMHAAYFRPGGVHQDLPEKLVQDIGDWCDPFLKALDDIDDLLTGNRIFKQRNVDIGVVSLEDCWAWGFSGVMVRGSGAAWDLRRAQPYECYSDLEFDIPIGKNGDNYDRYLIRMIEMRQSVRIMKQCVNRLLSDARTGPFSSIDGKVVPPKRGEMKRSMEALIHHFKLYTEGYHVPAGEVYTAVEAPKGEFGVYLVSDGSNKPYRCKIRAPGYAHLQAMDFMCRGHQLADVAAVLGSLDIVFGEVDR.

The protein belongs to the complex I 49 kDa subunit family. NDH-1 is composed of 14 different subunits. Subunits NuoB, C, D, E, F, and G constitute the peripheral sector of the complex.

It localises to the cell inner membrane. The catalysed reaction is a quinone + NADH + 5 H(+)(in) = a quinol + NAD(+) + 4 H(+)(out). Functionally, NDH-1 shuttles electrons from NADH, via FMN and iron-sulfur (Fe-S) centers, to quinones in the respiratory chain. The immediate electron acceptor for the enzyme in this species is believed to be ubiquinone. Couples the redox reaction to proton translocation (for every two electrons transferred, four hydrogen ions are translocated across the cytoplasmic membrane), and thus conserves the redox energy in a proton gradient. This is NADH-quinone oxidoreductase subunit D 1 from Rhizobium etli (strain ATCC 51251 / DSM 11541 / JCM 21823 / NBRC 15573 / CFN 42).